A 383-amino-acid chain; its full sequence is Fatty acid hydroxylase ahd1 (383 aa).

Helical transmembrane passes span 84–104 (VMGL…NKSW), 123–143 (TVHT…LFAL), 172–192 (LIPV…IIYY), and 214–236 (VAQW…RALH). The region spanning 217–341 (WLVCLLMEDI…VGLLDAIFKT (125 aa)) is the Fatty acid hydroxylase domain. N-linked (GlcNAc...) asparagine glycosylation is present at Asn342.

It belongs to the sterol desaturase family.

It is found in the membrane. It functions in the pathway secondary metabolite biosynthesis. Fatty acid hydroxylase; part of the gene cluster that mediates the biosynthesis of the glycolipid biosurfactant ustilagic acid (UA). UA is a secreted cellobiose glycolipid that is toxic for many microorganisms and confers biocontrol activity to U.maydis. UA consists of 15,16-dihydroxypalmitic or 2,15,16-trihydroxypalmitic acid, which is O-glycosidically linked to cellobiose at its terminal hydroxyl group. In addition, the cellobiose moiety is acetylated and acylated with a short-chain hydroxy fatty acid. UA biosynthesis starts with omega-hydroxylation of palmitic acid catalyzed by the cytochrome P450 monooxygenase cyp1. Terminal hydroxylation of palmitic acid precedes subterminal hydroxylation catalyzed by the cytochrome P450 monooxygenase cyp2. Sequential glucosylation of the hydroxy fatty acid is probably catalyzed by the glycosyltransferase ugt1. The cellobiose lipid is further decorated by acetylation of the proximal glucose residue and by acylation with a short-chain beta-hydroxy fatty acid at the distal glucose residue. The acyltransferase uat1 may be a good candidate for catalyzing either acetylation or acylation of the cellobiose lipid. The fatty acid synthase fas2 may be involved in synthesis of the carbon backbone of the short-chain beta-hydroxy fatty acid esterified to the cellobiose disaccharide. The secreted UA consists of a mixture of both alpha-hydroxylated and non-hydroxylated glycolipids; therefore, alpha-hydroxylation of the long-chain fatty, catalyzed by the fatty acid hydroxylase ahd1, occurs late in UA biosynthesis and may be the last step before secretion. This is Fatty acid hydroxylase ahd1 from Mycosarcoma maydis (Corn smut fungus).